A 76-amino-acid polypeptide reads, in one-letter code: Small ribosomal subunit protein bS16c (76 aa).

Belongs to the bacterial ribosomal protein bS16 family.

It localises to the plastid. The protein resides in the chloroplast. The protein is Small ribosomal subunit protein bS16c of Guillardia theta (Cryptophyte).